The chain runs to 400 residues: Enoyl-[acyl-carrier-protein] reductase [NADH] 1 (400 aa).

Residues 48–53 (GASSGY), 74–75 (FE), 111–112 (DA), and 139–140 (LA) each bind NAD(+). Residue tyrosine 225 coordinates substrate. Tyrosine 235 serves as the catalytic Proton donor. Residues lysine 244 and 273 to 275 (VVT) contribute to the NAD(+) site.

The protein belongs to the TER reductase family. Monomer.

It carries out the reaction a 2,3-saturated acyl-[ACP] + NAD(+) = a (2E)-enoyl-[ACP] + NADH + H(+). The protein operates within lipid metabolism; fatty acid biosynthesis. In terms of biological role, involved in the final reduction of the elongation cycle of fatty acid synthesis (FAS II). Catalyzes the reduction of a carbon-carbon double bond in an enoyl moiety that is covalently linked to an acyl carrier protein (ACP). The polypeptide is Enoyl-[acyl-carrier-protein] reductase [NADH] 1 (Vibrio vulnificus (strain CMCP6)).